Here is a 433-residue protein sequence, read N- to C-terminus: MNRDTSPDLQYLSGFGNEFASEALPGALPVGQNSPQKAPYGLYAELLSGTAFTMARSELRRTWLYRIRPSALHPRFERLARQPLNGPLGGVTPNRLRWNPQPLPTEPTDFIEGWLPMVANSAADKPAGVSVYIYCANRSMERVFFNADGELLIVPEQGRLRIATELGLLEVEPQEIAVVPRGMKFRVELPDGQARGYIAENHGAPLRLPDLGPIGSNGLANPRDFLAPVAHYEEAEGPVQLVQKFLGEHWACELQHSPLDVVAWHGSNVPYKYDLRRFNTLGTVSFDHPDPSIFTVLTSPTSVHGLANMDFVIFPPRWMVAENTFRPPWFHRNLMNEFMGLISGAYDAKAEGFLPGGASLHGVMSAHGPDAETCEKAIAADLAPHKIDNTMAFMFETSQVLRPSLQALECPQLQADYDSCWATLPSTFNPNRR.

H288 acts as the Proton acceptor in catalysis. Fe cation-binding residues include H331 and E337. Y346 and H367 together coordinate homogentisate. A Fe cation-binding site is contributed by H367.

The protein belongs to the homogentisate dioxygenase family. Hexamer; dimer of trimers. Fe cation is required as a cofactor.

The enzyme catalyses homogentisate + O2 = 4-maleylacetoacetate + H(+). Its pathway is amino-acid degradation; L-phenylalanine degradation; acetoacetate and fumarate from L-phenylalanine: step 4/6. In terms of biological role, involved in the catabolism of homogentisate (2,5-dihydroxyphenylacetate or 2,5-OH-PhAc), a central intermediate in the degradation of phenylalanine and tyrosine. Catalyzes the oxidative ring cleavage of the aromatic ring of homogentisate to yield maleylacetoacetate. This Pseudomonas putida (strain W619) protein is Homogentisate 1,2-dioxygenase.